Consider the following 437-residue polypeptide: Glutamyl-tRNA reductase (437 aa).

Substrate is bound by residues 49 to 52 (TCNR), S109, 114 to 116 (ETQ), and Q120. Residue C50 is the Nucleophile of the active site. 189 to 194 (GAGKMS) lines the NADP(+) pocket.

The protein belongs to the glutamyl-tRNA reductase family. Homodimer.

It carries out the reaction (S)-4-amino-5-oxopentanoate + tRNA(Glu) + NADP(+) = L-glutamyl-tRNA(Glu) + NADPH + H(+). Its pathway is porphyrin-containing compound metabolism; protoporphyrin-IX biosynthesis; 5-aminolevulinate from L-glutamyl-tRNA(Glu): step 1/2. Functionally, catalyzes the NADPH-dependent reduction of glutamyl-tRNA(Glu) to glutamate 1-semialdehyde (GSA). The polypeptide is Glutamyl-tRNA reductase (Paenibacillus macerans (Bacillus macerans)).